Consider the following 117-residue polypeptide: Ribonuclease P protein component 4 (117 aa).

Positions 63, 66, 92, and 95 each coordinate Zn(2+).

This sequence belongs to the eukaryotic/archaeal RNase P protein component 4 family. Consists of a catalytic RNA component and at least 4 protein subunits. Forms a subcomplex with Rnp1 which stimulates the catalytic RNA. Zn(2+) serves as cofactor.

It is found in the cytoplasm. The catalysed reaction is Endonucleolytic cleavage of RNA, removing 5'-extranucleotides from tRNA precursor.. In terms of biological role, part of ribonuclease P, a protein complex that generates mature tRNA molecules by cleaving their 5'-ends. The RNA is catalytic, but its KM for pre-tRNA is 170-fold decreased in the presence of the 4 known protein subunits (Rnp1-4). The protein subunits also decrease the amount of Mg(2+) needed for activity. The chain is Ribonuclease P protein component 4 from Pyrococcus furiosus (strain ATCC 43587 / DSM 3638 / JCM 8422 / Vc1).